The sequence spans 151 residues: Ribosome maturation factor RimP (151 aa).

The protein belongs to the RimP family.

It localises to the cytoplasm. In terms of biological role, required for maturation of 30S ribosomal subunits. In Shewanella oneidensis (strain ATCC 700550 / JCM 31522 / CIP 106686 / LMG 19005 / NCIMB 14063 / MR-1), this protein is Ribosome maturation factor RimP.